Here is a 385-residue protein sequence, read N- to C-terminus: 2-oxoglutarate-dependent dioxygenase AFUA_1G01000 (385 aa).

The region spanning 203-327 (PSDDFLRLLR…RYSVLVGTRP (125 aa)) is the Fe2OG dioxygenase domain. Fe cation contacts are provided by histidine 230, aspartate 232, and histidine 304. Arginine 318 lines the 2-oxoglutarate pocket.

It belongs to the iron/ascorbate-dependent oxidoreductase family. It depends on Fe(2+) as a cofactor.

In terms of biological role, 2-oxoglutarate-dependent dioxygenase; part of the gene cluster that mediates the biosynthesis of fumigermin that inhibits germination of spores of the inducing S.rapamycinicus, and thus helps the fungus to defend resources in the shared habitat against a bacterial competitor. The partially reducing polyketide synthase fngA alone is sufficient for the production of fumigermin. FgnA catalyzes the condensation of 3 malonyl-CoA units to an acetyl-CoA starter, and 3 methylations to yield fumigermin. It is remarkable that the five cluster genes including fgnA are conserved in distantly related fungi, supporting the assumption of a fumigermin cluster; it is thus possible that originally all five genes were functional, but that the genes encoding tailoring enzymes became inactive from mutations, similar to the case of the fgnA gene in strains A1163 and Af293. This chain is 2-oxoglutarate-dependent dioxygenase AFUA_1G01000, found in Aspergillus fumigatus (strain ATCC MYA-4609 / CBS 101355 / FGSC A1100 / Af293) (Neosartorya fumigata).